The primary structure comprises 120 residues: Histone H2B (120 aa).

A disordered region spans residues 1 to 26 (MAEPAKKKPKKLPKKDKGQKDIKRKK). Ala-2 bears the Blocked amino end (Ala) mark. An N6-acetyllysine mark is found at Lys-7, Lys-10, and Lys-11. Lys-115 participates in a covalent cross-link: Glycyl lysine isopeptide (Lys-Gly) (interchain with G-Cter in ubiquitin).

This sequence belongs to the histone H2B family. The nucleosome is a histone octamer containing two molecules each of H2A, H2B, H3 and H4 assembled in one H3-H4 heterotetramer and two H2A-H2B heterodimers. The octamer wraps approximately 147 bp of DNA. In terms of processing, can be acetylated to form H2BK6ac, H2BK33ac and H2BK34ac. Monoubiquitinated to form H2BK143ub1; may give a specific tag for epigenetic transcriptional activation.

The protein localises to the nucleus. Its subcellular location is the chromosome. Functionally, core component of nucleosome. Nucleosomes wrap and compact DNA into chromatin, limiting DNA accessibility to the cellular machineries which require DNA as a template. Histones thereby play a central role in transcription regulation, DNA repair, DNA replication and chromosomal stability. DNA accessibility is regulated via a complex set of post-translational modifications of histones, also called histone code, and nucleosome remodeling. This chain is Histone H2B, found in Pisum sativum (Garden pea).